We begin with the raw amino-acid sequence, 648 residues long: Probable LRR receptor-like serine/threonine-protein kinase At4g30520 (648 aa).

Residues 1-30 (MVVVTKKTMKIQIHLLYSFLFLCFSTLTLS) form the signal peptide. Residues 31-238 (SEPRNPEVEA…SSSGRRSNRL (208 aa)) lie on the Extracellular side of the membrane. Asparagine 99 and asparagine 112 each carry an N-linked (GlcNAc...) asparagine glycan. 4 LRR repeats span residues 100-125 (LTNL…GFLP), 127-148 (LQTL…IDQL), 149-172 (SSLQ…LSQI), and 174-199 (HLSF…TFNV). N-linked (GlcNAc...) asparagine glycans are attached at residues asparagine 158 and asparagine 184. A helical membrane pass occupies residues 239–259 (AIALSVSLGSVVILVLALGSF). Residues 260 to 648 (CWYRKKQRRL…SFAMELSGPR (389 aa)) lie on the Cytoplasmic side of the membrane. A Phosphothreonine modification is found at threonine 300. Residues 303–582 (FSSKNILGAG…EGDGLAERWA (280 aa)) enclose the Protein kinase domain. 309 to 317 (LGAGGFGNV) lines the ATP pocket. A Phosphothreonine modification is found at threonine 326. Lysine 331 provides a ligand contact to ATP. Serine 384 and serine 387 each carry phosphoserine. Residue aspartate 426 is the Proton acceptor of the active site. Phosphothreonine is present on residues threonine 459, threonine 460, and threonine 465. Phosphotyrosine is present on tyrosine 473. Serine 475 is modified (phosphoserine). Threonine 476 carries the post-translational modification Phosphothreonine. A Phosphoserine modification is found at serine 480. Position 555 is a phosphothreonine (threonine 555).

It belongs to the protein kinase superfamily. Ser/Thr protein kinase family.

The protein localises to the cell membrane. It catalyses the reaction L-seryl-[protein] + ATP = O-phospho-L-seryl-[protein] + ADP + H(+). It carries out the reaction L-threonyl-[protein] + ATP = O-phospho-L-threonyl-[protein] + ADP + H(+). In Arabidopsis thaliana (Mouse-ear cress), this protein is Probable LRR receptor-like serine/threonine-protein kinase At4g30520.